The chain runs to 495 residues: MAFEKNNEPFPLHFVLFPFMAQGHMIPMVDIARLLAQRGVLITIVTTPHNAARFKNVLNRAIESGLPINLVQVKFPYQEAGLQEGQENMDLLTTMEQITSFFKAVNLLKEPVQNLIEEMSPRPSCLISDMCLSYTSEIAKKFKIPKILFHGMGCFCLLCVNVLRKNREILDNLKSDKEYFIVPYFPDRVEFTRPQVPVETYVPAGWKEILEDMVEADKTSYGVIVNSFQELEPAYAKDFKEARSGKAWTIGPVSLCNKVGVDKAERGNKSDIDQDECLEWLDSKEPGSVLYVCLGSICNLPLSQLLELGLGLEESQRPFIWVIRGWEKYKELVEWFSESGFEDRIQDRGLLIKGWSPQMLILSHPSVGGFLTHCGWNSTLEGITAGLPMLTWPLFADQFCNEKLVVQILKVGVSAEVKEVMKWGEEEKIGVLVDKEGVKKAVEELMGESDDAKERRRRAKELGESAHKAVEEGGSSHSNITFLLQDIMQLAQSNN.

Residues Ser296, 356-358, 373-381, and 395-398 contribute to the UDP-alpha-D-glucose site; these read SPQ, HCGWNSTLE, and FADQ. The interval 449–475 is disordered; the sequence is SDDAKERRRRAKELGESAHKAVEEGGS. Basic and acidic residues predominate over residues 450-471; it reads DDAKERRRRAKELGESAHKAVE.

It belongs to the UDP-glycosyltransferase family. As to expression, expressed in leaves and flowers, and at a very low level in roots.

Its function is as follows. Acts as a UDP-glucose:flavonol-3-O-glycoside-7-O-glucosyltransferase. 6- and 7-hydroxyflavone, but not 3- or 5-hydroxyflavone are accepted as substrates. Possesses low quercetin 3-O-glucosyltransferase, 7-O-glucosyltransferase and 4'-O-glucosyltransferase activities in vitro. The protein is UDP-glycosyltransferase 73C6 (UGT73C6) of Arabidopsis thaliana (Mouse-ear cress).